A 309-amino-acid polypeptide reads, in one-letter code: Probable manganese-dependent inorganic pyrophosphatase (309 aa).

Residues His9, Asp13, Asp15, Asp75, His97, and Asp149 each contribute to the Mn(2+) site.

This sequence belongs to the PPase class C family. The cofactor is Mn(2+).

Its subcellular location is the cytoplasm. The enzyme catalyses diphosphate + H2O = 2 phosphate + H(+). This chain is Probable manganese-dependent inorganic pyrophosphatase, found in Staphylococcus aureus (strain COL).